A 1257-amino-acid polypeptide reads, in one-letter code: ATP-binding cassette sub-family B member 5 (1257 aa).

Positions 1–24 (MENSERAEEMQENYQRNGTAEEQP) are disordered. The N-linked (GlcNAc...) asparagine glycan is linked to Asn17. A helical membrane pass occupies residues 49 to 69 (ILGILASLVNGACLPLMPLVL). In terms of domain architecture, ABC transmembrane type-1 1 spans 49-350 (ILGILASLVN…AAVPHFETFA (302 aa)). 2 N-linked (GlcNAc...) asparagine glycosylation sites follow: Asn85 and Asn91. The next 5 helical transmembrane spans lie at 110–130 (YVGI…LWII), 181–201 (KIAL…VGLV), 203–223 (GWKL…SAAA), 294–314 (VYFF…SLIL), and 322–342 (IGTV…IGAA). 3 N-linked (GlcNAc...) asparagine glycosylation sites follow: Asn371, Asn390, and Asn423. In terms of domain architecture, ABC transporter 1 spans 386–622 (VEFKNVSFNY…RGLYYSLVMS (237 aa)). Residue 421–428 (GLNGSGKS) coordinates ATP. A run of 2 helical transmembrane segments spans residues 693 to 713 (VLGT…SIIF) and 737 to 757 (MIFV…GLFY). The ABC transmembrane type-1 2 domain maps to 693–980 (VLGTLASVLN…TLVLAPEYSK (288 aa)). N-linked (GlcNAc...) asparagine glycans are attached at residues Asn789 and Asn819. Residues 827-847 (VIISFIYGWEMTFLILSIAPV) form a helical membrane-spanning segment. Asn910 is a glycosylation site (N-linked (GlcNAc...) asparagine). A run of 2 helical transmembrane segments spans residues 917–937 (IIGS…AAGF) and 954–974 (MFIV…TLVL). The 239-residue stretch at 1015 to 1253 (LEFREVSFFY…RDIYFKLVNA (239 aa)) folds into the ABC transporter 2 domain. 1050–1057 (GSSGCGKS) contributes to the ATP binding site. 2 N-linked (GlcNAc...) asparagine glycosylation sites follow: Asn1104 and Asn1188.

Belongs to the ABC transporter superfamily. ABCB family. Multidrug resistance exporter (TC 3.A.1.201) subfamily. As to expression, expressed by CD133-expressing progenitor cells among epidermal melanocytes (at protein level). Widely expressed with specific expression in pigment cells. Highly expressed in several malignant tissues: highly expressed in clinical melanomas, with low expression in normal skin. In melanoma, marks malignant melanoma-initiating cells (MMIC), in which clinical virulence resides as a consequence of unlimited self-renewal capacity, resulting in inexorable tumor progression and metastasis. Also highly expressed in a number of leukemia cells. Expressed in basal limbal epithelium.

It localises to the cell membrane. The enzyme catalyses daunorubicin(in) + ATP + H2O = daunorubicin(out) + ADP + phosphate + H(+). In terms of biological role, energy-dependent efflux transporter responsible for decreased drug accumulation in multidrug-resistant cells. Specifically present in limbal stem cells, where it plays a key role in corneal development and repair. This chain is ATP-binding cassette sub-family B member 5, found in Homo sapiens (Human).